Here is a 186-residue protein sequence, read N- to C-terminus: Protein FAM219A (186 aa).

Disordered regions lie at residues 1–47 (MMEE…NYKP) and 59–132 (ELAR…GYSS). Residues 67–81 (KNGTVGSPVNQQPKK) show a composition bias toward polar residues. Positions 123-132 (SRYSSSGYSS) are enriched in low complexity.

It belongs to the FAM219 family.

This Danio rerio (Zebrafish) protein is Protein FAM219A (fam219a).